A 286-amino-acid chain; its full sequence is Large ribosomal subunit protein uL3 (286 aa).

Q152 carries the post-translational modification N5-methylglutamine. The segment covering 246 to 265 has biased composition (low complexity); that stretch reads EAAAAAAAAEEQAAMEAAEA. Residues 246–286 are disordered; the sequence is EAAAAAAAAEEQAAMEAAEAAEAKTDTVAEAEAAEKKEGDA. The segment covering 266-286 has biased composition (basic and acidic residues); that stretch reads AEAKTDTVAEAEAAEKKEGDA.

It belongs to the universal ribosomal protein uL3 family. In terms of assembly, part of the 50S ribosomal subunit. Forms a cluster with proteins L14 and L19. Post-translationally, methylated by PrmB.

One of the primary rRNA binding proteins, it binds directly near the 3'-end of the 23S rRNA, where it nucleates assembly of the 50S subunit. In Roseobacter denitrificans (strain ATCC 33942 / OCh 114) (Erythrobacter sp. (strain OCh 114)), this protein is Large ribosomal subunit protein uL3.